Here is a 342-residue protein sequence, read N- to C-terminus: Aldo-keto reductase pigE (342 aa).

An N-terminal signal peptide occupies residues 1 to 27 (MGSISPKTRFPIVLGAGLIGSPGLFEG). Asp-52 contacts NADP(+). Tyr-57 functions as the Proton donor in the catalytic mechanism. NADP(+) is bound by residues Gln-182 and Arg-236. The N-linked (GlcNAc...) asparagine glycan is linked to Asn-271.

The protein belongs to the aldo/keto reductase family. Aldo/keto reductase 2 subfamily.

The protein operates within secondary metabolite biosynthesis. Aldo-keto reductase; part of the gene cluster that mediates the biosynthesis of azaphilone pigments (MonAzPs), a complex mixture of compounds with a common azaphilone skeleton very widely used as food colorants. Within the pathway, pigE is involved in the dehydration of the C-11 alcohol followed by the reduction of the C6(7) double bond which increases the electrophilicity of the C-5 ketone of the resulting acyl benzopyran and allows the intramolecular Knoevenagel aldol condensation with the C-20 enol of the side chain to yield the characteristic linear tricyclic carbon skeletons of the yellow pigments. The first step of the pathway is performed by the nrPKS pigA that forms the hexaketide precursor from successive condensations of five malonyl-CoA units, with a simple acetyl-CoA starter unit. The role of esterase pigG is not clear, but it may play at most a supplementary role in the formation of the benzaldehyde produced by the pigA nrPKS. This very reactive benzaldehyde is intercepted by the pigC ketoreductase that to provide the first stable enzyme-free MonAzPs intermediate, 6-(4-hydroxy-2-oxopentyl)-3-methyl-2,4-dioxocyclohexane carbaldehyde, also known as M7PKS-1. The FAD-dependent monooxygenase pigN hydroxylates M7PKS-1 at C-4, which triggers the formation of the pyran ring. PigJ, pigK and pigD are involved in the acetylation of the pyran ring. PigJ and pigK form the two subunits of a dedicated fungal FAS that produces the side chain fatty acyl moiety of MonAzPs and pigD transfers the fatty acyl chain to the C-4 alcohol. PigM and pigO are involved in the elimination of the omega-1 alcohol. PigM acts as an O-acetyltransferase that synthesizes the putative O-11 acetyl intermediate whereas pigO eliminates acetic acid to yield an intermediate with a C10(11) double bond. The dehydration of the C-11 alcohol followed by the reduction of the C6(7) double bond by the NAD(P)H-dependent oxidoreductase pigE increases the electrophilicity of the C-5 ketone of the resulting acyl benzopyran. This in turn sets up the C-5 ketone for an intramolecular Knoevenagel aldol condensation with the C-20 enol of the side chain. This condensation affords the characteristic linear tricyclic carbon skeletons of the yellow pigments that serve as the common precursors for the classical yellow pigments monascin and ankaflavin, orange pigments rubopunctatin and monascorubrin, and red pigments ribropunctamine and monascorubramine. The FAD-dependent oxidoreductase pigF is especially invoved in the biosynthesis of orange and red pigments via desaturation of C6(7). The chain is Aldo-keto reductase pigE from Monascus ruber (Mold).